Consider the following 166-residue polypeptide: Protein C2-DOMAIN ABA-RELATED 11 (166 aa).

M1 is modified (N-acetylmethionine). Residues 1-103 form the C2 domain; the sequence is MGEPLGLLQV…ISVARLRHVV (103 aa). G2 carries the post-translational modification N-acetylglycine; in Protein C2-DOMAIN ABA-RELATED 11, N-terminally processed. Ca(2+)-binding residues include R21, D22, D27, D73, K74, D75, and D81.

It belongs to the plant CAR protein family. In terms of assembly, binds to PYR/PYL/RCAR abscisic acid intracellular receptors in an ABA-independent manner, both at the plasma membrane and in the nucleus.

It is found in the cell membrane. The protein resides in the nucleus. Its function is as follows. Stimulates the GTPase/ATPase activities of Obg-like ATPases. Mediates the transient calcium-dependent interaction of PYR/PYL/RCAR abscisic acid (ABA) receptors with the plasma membrane and thus regulates ABA sensitivity. This is Protein C2-DOMAIN ABA-RELATED 11 from Arabidopsis thaliana (Mouse-ear cress).